The following is a 1036-amino-acid chain: Histidine kinase 3 (1036 aa).

The Extracellular segment spans residues 1 to 8 (MSLFHVLG). Residues 9–29 (FGVKIGHLFWMLCCWFVSWFV) form a helical membrane-spanning segment. Over 30–94 (DNGIEDKSGL…VKFNKAWWRK (65 aa)) the chain is Cytoplasmic. A helical membrane pass occupies residues 95 to 115 (LVVVWVVFWVLVSIWTFWYFS). At 116–399 (SQAMEKRKET…CRFKQKPPWP (284 aa)) the chain is on the extracellular side. In terms of domain architecture, CHASE spans 163–389 (IPSAIDQRTF…GDPLRKHEMR (227 aa)). Residues 400 to 420 (VLSMVTSFGILVIALLVAHII) form a helical membrane-spanning segment. Topologically, residues 421–1036 (HATVSRIHKV…FFNSPSDTES (616 aa)) are cytoplasmic. The 267-residue stretch at 457 to 723 (TVSHEIRTPM…TFTFTAVFSN (267 aa)) folds into the Histidine kinase domain. His460 is subject to Phosphohistidine; by autocatalysis. 2 consecutive Response regulatory domains span residues 746 to 865 (KAVV…QRGL) and 891 to 1028 (KILI…SRFF). Position 941 is a 4-aspartylphosphate (Asp941).

Interacts with AHK2, AHK4, AHP1, AHP2, AHP3, AHP5 and At5g43560. Post-translationally, autophosphorylated predominantly on His residues. Activation probably requires a transfer of a phosphate group between a His in the transmitter domain and an Asp of the receiver domain. Mostly expressed in leaves and flowers, and, to a lower extent, in roots, stems, and siliques, especially in the vascular tissues. Present in seedlings.

It localises to the cell membrane. The protein resides in the endoplasmic reticulum membrane. It carries out the reaction ATP + protein L-histidine = ADP + protein N-phospho-L-histidine.. Activated by cytokinins to initiate phosphorelay signaling. This cytokinin-mediated activation is repressed by the trans-zeatin antagonists 6-(2-hydroxy-3-methylbenzylamino)purine (PI-55) and 6-(2,5-Dihydroxybenzylamino)purine (LGR-991). Functionally, cytokinins (CK) receptor related to bacterial two-component regulators. Functions as a histidine kinase and transmits the stress signal to a downstream MAPK cascade. This protein undergoes an ATP-dependent autophosphorylation at a conserved histidine residue in the kinase core, and a phosphoryl group is then transferred to a conserved aspartate residue in the receiver domain. In the presence of cytokinin, feeds phosphate to phosphorelay-integrating histidine phosphotransfer protein (HPt) and activates subsequent cascade. Involved in meristems establishment in seedlings. Redundant negative regulator of drought and salt stress responses and abscisic acid (ABA) signaling. Together with AHK2, plays a negative regulatory role in cold stress signaling via inhibition of ABA response, occurring independently of the cold acclimation pathway. Redundant positive regulator of cytokinin signaling that regulates many developmental processes including seed germination, cell division, seed size, chlorophyll retention during leaf senescence, root repression and shoot promotion. Can interact with isoprenoid-type cytokinins trans-zeatin (tZ and tZR), cis-zeatin (cZ), dihydrozeatin (DZ), buta-2,3-dienyladenine (HA-8), penta-2,3-dienyladenine (HA-1), 4-methyl-penta-2,3-dienyladenine (HA-10), 4-hydroxy-2-butynyladenine (RM1), 2-propynyladenine (RM3), 2-butynyladenine (RM6), and cytokinin ribosides and ribotides. Together with AHK4, involved in the cytokinin-dependent responses to Pi starvation and sucrose stresses. Promotes cytokinin-mediated leaf longevity through a specific phosphorylation of the response regulator ARR2. Involved in alkamides (e.g. N-isobutyl decanamide) and N-acylethanolamides (NAE) signaling that control meristematic activity and differentiation processes during plant development. Contributes to vascular bundle formation and secondary growth in a cytokinin-dependent manner, probably by promoting the maintenance of mitotic activity and/or identity of procambial cells. Plays a role in the cytokinin-mediated repression of the iron uptake pathway. Required by the cytokinin-dependent flower development regulation pathway. This Arabidopsis thaliana (Mouse-ear cress) protein is Histidine kinase 3 (AHK3).